We begin with the raw amino-acid sequence, 298 residues long: Esterase Rv0045c (298 aa).

The Nucleophile role is filled by Ser122. Residues Asp146 and His277 contribute to the active site.

This sequence belongs to the AB hydrolase superfamily. As to quaternary structure, monomer.

The catalysed reaction is a carboxylic ester + H2O = an alcohol + a carboxylate + H(+). It carries out the reaction a butanoate ester + H2O = an aliphatic alcohol + butanoate + H(+). It catalyses the reaction an acetyl ester + H2O = an aliphatic alcohol + acetate + H(+). The enzyme catalyses a hexanoate ester + H2O = an aliphatic alcohol + hexanoate + H(+). The catalysed reaction is a tetradecanoate ester + H2O = an aliphatic alcohol + tetradecanoate + H(+). With respect to regulation, hydrolysis of a fluorogenic ester substrate (MOAME) is allosterically inhibited by divalent transition metal cations (Cu(2+), Zn(2+), Ni(2+) and Co(2+)). Inhibition is largely due to a two order of magnitude drop in kcat, with relatively little change in KM. The thermal stability decreases with increasing concentrations of Ni(2+). In terms of biological role, esterase likely involved in ester/lipid metabolism. Shows strong substrate selectivity toward short, straight chain alkyl esters with the highest activity toward four atom chains. The physiological substrate is unknown. Is able to hydrolyze ester bonds within a wide range of p-nitrophenyl derivatives (C2-C14) in vitro. The protein is Esterase Rv0045c of Mycobacterium tuberculosis (strain ATCC 25618 / H37Rv).